Consider the following 527-residue polypeptide: PTS system maltose-specific EIICB component (527 aa).

The region spanning methionine 1–lysine 418 is the PTS EIIC type-1 domain. The next 12 helical transmembrane spans lie at phenylalanine 8–isoleucine 28, glycine 59–alanine 79, valine 93–glycine 113, isoleucine 132–leucine 152, tyrosine 173–tryptophan 193, isoleucine 200–phenylalanine 220, isoleucine 224–valine 244, phenylalanine 276–valine 296, leucine 305–proline 325, isoleucine 326–alanine 346, valine 357–phenylalanine 377, and methionine 382–phenylalanine 402. Positions aspartate 449–glutamine 527 constitute a PTS EIIB type-1 domain. Cysteine 471 (phosphocysteine intermediate; for EIIB activity) is an active-site residue.

It is found in the cell membrane. It carries out the reaction D-maltose(out) + N(pros)-phospho-L-histidyl-[protein] = alpha-maltose 6'-phosphate(in) + L-histidyl-[protein]. The phosphoenolpyruvate-dependent sugar phosphotransferase system (sugar PTS), a major carbohydrate active transport system, catalyzes the phosphorylation of incoming sugar substrates concomitantly with their translocation across the cell membrane. This system is involved in maltose transport. The sequence is that of PTS system maltose-specific EIICB component from Bacillus subtilis (strain 168).